The primary structure comprises 254 residues: Gamma-glutamyl-gamma-aminobutyrate hydrolase (254 aa).

The Glutamine amidotransferase type-1 domain occupies 16–250 (RNRLKGHATQ…ITACQHHIAE (235 aa)). Catalysis depends on cysteine 114, which acts as the Nucleophile. Residues histidine 222 and glutamate 224 contribute to the active site.

It belongs to the peptidase C26 family.

It catalyses the reaction 4-(gamma-L-glutamylamino)butanoate + H2O = 4-aminobutanoate + L-glutamate. Its pathway is amine and polyamine degradation; putrescine degradation; 4-aminobutanoate from putrescine: step 4/4. Functionally, involved in the breakdown of putrescine via hydrolysis of the gamma-glutamyl linkage of gamma-glutamyl-gamma-aminobutyrate. The protein is Gamma-glutamyl-gamma-aminobutyrate hydrolase (puuD) of Escherichia coli O157:H7.